We begin with the raw amino-acid sequence, 236 residues long: Orotidine 5'-phosphate decarboxylase (236 aa).

Residues D17, K39, 66 to 75, T125, R186, Q195, G215, and R216 contribute to the substrate site; that span reads DLKFHDIPNT. Residue K68 is the Proton donor of the active site.

This sequence belongs to the OMP decarboxylase family. Type 1 subfamily. In terms of assembly, homodimer.

The enzyme catalyses orotidine 5'-phosphate + H(+) = UMP + CO2. It functions in the pathway pyrimidine metabolism; UMP biosynthesis via de novo pathway; UMP from orotate: step 2/2. In terms of biological role, catalyzes the decarboxylation of orotidine 5'-monophosphate (OMP) to uridine 5'-monophosphate (UMP). This Buchnera aphidicola subsp. Acyrthosiphon pisum (strain 5A) protein is Orotidine 5'-phosphate decarboxylase.